We begin with the raw amino-acid sequence, 210 residues long: Eukaryotic translation initiation factor 2 subunit gamma (210 aa).

The tr-type G domain maps to 1–196; it reads IGHVAHGKST…HLVETITPPR (196 aa). The interval 2–9 is G1; it reads GHVAHGKS. A GTP-binding site is contributed by 5–10; sequence AHGKST. The interval 30 to 34 is G2; it reads NITIK. Residues 85–88 are G3; it reads DCPG. Residues 141 to 144 and 174 to 176 contribute to the GTP site; these read NKID and SAI. The segment at 141 to 144 is G4; the sequence is NKID. Positions 174–176 are G5; that stretch reads SAI.

The protein belongs to the TRAFAC class translation factor GTPase superfamily. Classic translation factor GTPase family. EIF2G subfamily. Eukaryotic translation initiation factor 2 eIF2 is a heterotrimeric complex composed of an alpha, a beta and a gamma subunit. The factors eIF-1, eIF-2, eIF-3, TIF5/eIF-5 and methionyl-tRNAi form a multifactor complex (MFC) that may bind to the 40S ribosome.

The protein resides in the cytoplasm. Its subcellular location is the cytosol. It catalyses the reaction GTP + H2O = GDP + phosphate + H(+). In terms of biological role, as a subunit of eukaryotic initiation factor 2 eIF2, involved in the early steps of protein synthesis. In the presence of GTP, eIF-2 forms a ternary complex with initiator tRNA Met-tRNAi and then recruits the 40S ribosomal complex and initiation factors eIF-1, eIF-1A and eIF-3 to form the 43S pre-initiation complex (43S PIC), a step that determines the rate of protein translation. The 43S PIC binds to mRNA and scans downstream to the initiation codon, where it forms a 48S initiation complex by codon-anticodon base pairing. This leads to the displacement of eIF-1 to allow GTPase-activating protein (GAP) eIF-5-mediated hydrolysis of eIF2-bound GTP. Hydrolysis of GTP and release of Pi, which makes GTP hydrolysis irreversible, causes the release of the eIF-2-GDP binary complex from the 40S subunit, an event that is essential for the subsequent joining of the 60S ribosomal subunit to form an elongation-competent 80S ribosome. In order for eIF-2 to recycle and catalyze another round of initiation, the GDP bound to eIF-2 must be exchanged with GTP by way of a reaction catalyzed by GDP-GTP exchange factor (GEF) eIF-2B. This chain is Eukaryotic translation initiation factor 2 subunit gamma, found in Spironucleus vortens.